The sequence spans 223 residues: Probable Ras-related protein Rab-4A (223 aa).

Position 16 to 23 (16 to 23 (GNAGTGKT)) interacts with GTP. The Effector region motif lies at 38–46 (TQHTIGAEF). Residues 64 to 68 (DTAGQ) and 122 to 125 (NKKD) each bind GTP. Residues cysteine 221 and cysteine 223 are each lipidated (S-geranylgeranyl cysteine). Cysteine methyl ester is present on cysteine 223.

Belongs to the small GTPase superfamily. Rab family.

Its subcellular location is the cell membrane. Functionally, protein transport. Probably involved in vesicular traffic. This is Probable Ras-related protein Rab-4A from Echinococcus multilocularis (Fox tapeworm).